The primary structure comprises 496 residues: Glycine receptor subunit beta (496 aa).

Positions 1–22 (MKFSLAVSFFILMSLLFEDACS) are cleaved as a signal peptide. The Extracellular portion of the chain corresponds to 23–268 (KEKSSKKGKG…IFTLRRQVGF (246 aa)). A glycan (N-linked (GlcNAc...) asparagine) is linked at Asn-54. Residues Arg-108 and Ser-174 each contribute to the glycine site. Cys-183 and Cys-197 are oxidised to a cystine. N-linked (GlcNAc...) asparagine glycosylation occurs at Asn-242. Cys-243 and Cys-255 form a disulfide bridge. Thr-250 provides a ligand contact to glycine. A helical transmembrane segment spans residues 269-289 (YMMGVYAPTLLIVVLSWLSFW). At 290-294 (INPDA) the chain is on the cytoplasmic side. The helical transmembrane segment at 295-315 (SAARVPLGIFSVLSLASECTT) threads the bilayer. At 316–327 (LAAELPKVSYVK) the chain is on the extracellular side. A helical transmembrane segment spans residues 328-349 (ALDVWLIACLLFGFASLVEYAV). Residues 350-471 (VQVMLNNPKR…KPVIPTAAKR (122 aa)) are Cytoplasmic-facing. A Phosphothreonine modification is found at Thr-391. The chain crosses the membrane as a helical span at residues 472–495 (IDLYARALFPFCFLFFNVIYWSIY). A topological domain (extracellular) is located at residue Leu-496.

Belongs to the ligand-gated ion channel (TC 1.A.9) family. Glycine receptor (TC 1.A.9.3) subfamily. GLRB sub-subfamily. Forms heteropentamers with glycin receptor alpha subunits. Heteropentamers with GLRA1 can be composed of two GLRA1 and three GLRB subunits, or three GLRA1 and two GLRB subunits, or four GLRA1 subunits and one GLRB subunit. Forms heteropentamers with GLRA2. Functional GLRB-GLRA2 heteropentamers contain four GLRA2 subunits and one GLRB subunit, although alternative subunit composition cannot be excluded. Forms a heteropentamer with GLRA3. Interacts with GPHN. As to expression, detected in spinal cord and brain stem (at protein level). Detected in spinal cord, cerebellum and brain cortex.

It is found in the postsynaptic cell membrane. It localises to the cell membrane. The protein resides in the synapse. Its subcellular location is the perikaryon. The protein localises to the cell projection. It is found in the dendrite. It localises to the cytoplasm. It catalyses the reaction chloride(in) = chloride(out). Channel opening is triggered by extracellular glycine. Heteropentameric channels composed of GLRB and GLRA1 are activated by lower glycine levels than homopentameric GLRA1. Subunit of heteromeric glycine-gated chloride channels. Plays an important role in the down-regulation of neuronal excitability. Contributes to the generation of inhibitory postsynaptic currents. The protein is Glycine receptor subunit beta (Glrb) of Rattus norvegicus (Rat).